The chain runs to 460 residues: 4-O-methyl-glucuronoyl methylesterase (460 aa).

Positions 1–17 (MASRFFALLLLAIPIQA) are cleaved as a signal peptide. A Pyrrolidone carboxylic acid modification is found at Gln18. The CBM1 domain occupies 18–53 (QSPVWGQCGGIGWSGPTTCVGGATCVSYNPYYSQCI). 3 disulfide bridges follow: Cys96-Cys131, Cys277-Cys412, and Cys309-Cys384. The GXSYXG catalytic site motif motif lies at 276–281 (GCSRNG). Residue Ser278 is the Nucleophile of the active site. The substrate site is built by Lys282, Gln324, Glu332, and Trp375. Catalysis depends on His411, which acts as the Proton donor/acceptor. An N-linked (GlcNAc...) asparagine glycan is attached at Asn447.

The protein belongs to the carbohydrate esterase 15 (CE15) family.

The protein localises to the secreted. The catalysed reaction is a 4-O-methyl-alpha-D-glucuronosyl ester derivative + H2O = 4-O-methyl-alpha-D-glucuronate derivative + an alcohol + H(+). Its function is as follows. Glucuronoyl esterase which may play a significant role in biomass degradation, as it is considered to disconnect hemicellulose from lignin through the hydrolysis of the ester bond between 4-O-methyl-D-glucuronic acid residues of glucuronoxylans and aromatic alcohols of lignin. Does not hydrolyze substrates of other carbohydrate esterases such as acetylxylan esterase, acetyl esterase and feruloyl esterase. This chain is 4-O-methyl-glucuronoyl methylesterase, found in Hypocrea jecorina (strain QM6a) (Trichoderma reesei).